The sequence spans 223 residues: NAD(P)H-hydrate epimerase (223 aa).

Residues 9–211 enclose the YjeF N-terminal domain; that stretch reads AIKLDEELMG…ELKDKLHLIL (203 aa). Position 60–64 (60–64) interacts with (6S)-NADPHX; it reads NNGGD. Positions 61 and 120 each coordinate K(+). (6S)-NADPHX-binding positions include 124-130 and aspartate 153; that span reads GFSFKGP. Serine 156 lines the K(+) pocket.

This sequence belongs to the NnrE/AIBP family. It depends on K(+) as a cofactor.

It carries out the reaction (6R)-NADHX = (6S)-NADHX. The enzyme catalyses (6R)-NADPHX = (6S)-NADPHX. Catalyzes the epimerization of the S- and R-forms of NAD(P)HX, a damaged form of NAD(P)H that is a result of enzymatic or heat-dependent hydration. This is a prerequisite for the S-specific NAD(P)H-hydrate dehydratase to allow the repair of both epimers of NAD(P)HX. This chain is NAD(P)H-hydrate epimerase, found in Entamoeba histolytica (strain ATCC 30459 / HM-1:IMSS / ABRM).